Here is a 380-residue protein sequence, read N- to C-terminus: Homoserine O-succinyltransferase (380 aa).

One can recognise an AB hydrolase-1 domain in the interval 49–357 (NAILICHALS…ESTHGHDAFL (309 aa)). Catalysis depends on Ser155, which acts as the Nucleophile. A substrate-binding site is contributed by Arg225. Residues Asp320 and His353 contribute to the active site. Asp354 serves as a coordination point for substrate.

The protein belongs to the AB hydrolase superfamily. MetX family. Homodimer.

It is found in the cytoplasm. It catalyses the reaction L-homoserine + succinyl-CoA = O-succinyl-L-homoserine + CoA. It functions in the pathway amino-acid biosynthesis; L-methionine biosynthesis via de novo pathway; O-succinyl-L-homoserine from L-homoserine: step 1/1. In terms of biological role, transfers a succinyl group from succinyl-CoA to L-homoserine, forming succinyl-L-homoserine. This Laribacter hongkongensis (strain HLHK9) protein is Homoserine O-succinyltransferase.